A 148-amino-acid chain; its full sequence is FAD synthase (148 aa).

ATP is bound by residues 14 to 15, 19 to 22, and D97; these read TF and HPGH.

This sequence belongs to the archaeal FAD synthase family. Homodimer. Requires a divalent metal cation as cofactor.

It catalyses the reaction FMN + ATP + H(+) = FAD + diphosphate. The protein operates within cofactor biosynthesis; FAD biosynthesis; FAD from FMN: step 1/1. Functionally, catalyzes the transfer of the AMP portion of ATP to flavin mononucleotide (FMN) to produce flavin adenine dinucleotide (FAD) coenzyme. This chain is FAD synthase, found in Natrialba magadii (strain ATCC 43099 / DSM 3394 / CCM 3739 / CIP 104546 / IAM 13178 / JCM 8861 / NBRC 102185 / NCIMB 2190 / MS3) (Natronobacterium magadii).